Reading from the N-terminus, the 92-residue chain is Sec-independent protein translocase protein TatA (92 aa).

The helical transmembrane segment at 1-21 (MGIFDWKHWIVILVVVVLVFG) threads the bilayer. Residues 43-92 (MNDDEKPADPTVTPAQPVPPVQPQATAQANPPHTIDVQAQKVEEPIRKDV) form a disordered region. The span at 65–74 (PQATAQANPP) shows a compositional bias: low complexity. The segment covering 83–92 (KVEEPIRKDV) has biased composition (basic and acidic residues).

The protein belongs to the TatA/E family. In terms of assembly, the Tat system comprises two distinct complexes: a TatABC complex, containing multiple copies of TatA, TatB and TatC subunits, and a separate TatA complex, containing only TatA subunits. Substrates initially bind to the TatABC complex, which probably triggers association of the separate TatA complex to form the active translocon.

The protein resides in the cell inner membrane. Part of the twin-arginine translocation (Tat) system that transports large folded proteins containing a characteristic twin-arginine motif in their signal peptide across membranes. TatA could form the protein-conducting channel of the Tat system. The polypeptide is Sec-independent protein translocase protein TatA (Pseudomonas fluorescens (strain Pf0-1)).